A 601-amino-acid chain; its full sequence is Putative ankyrin repeat protein R841 (601 aa).

12 ANK repeats span residues 17-50 (NNIT…DVNA), 54-86 (HGKS…DVNH), 91-123 (QRSV…NINY), 165-197 (RENI…NIDH), 201-234 (YGQT…NINS), 238-269 (KGWS…EINS), 274-310 (NETM…SIDN), 314-349 (KGYT…NINS), 361-390 (VCCD…DVNS), 397-427 (TILM…NPNI), 432-463 (YHKF…DPNI), and 467-500 (IGNN…SYNC).

This Acanthamoeba polyphaga mimivirus (APMV) protein is Putative ankyrin repeat protein R841.